Consider the following 426-residue polypeptide: Phosphomethylpyrimidine synthase (426 aa).

Substrate is bound by residues Asn-65, Met-94, Tyr-123, His-162, Ser-184–Gly-186, Asp-225–Arg-228, and Glu-264. His-268 lines the Zn(2+) pocket. Tyr-291 contacts substrate. Residue His-332 coordinates Zn(2+). Residues Cys-408, Cys-411, and Cys-415 each coordinate [4Fe-4S] cluster.

It belongs to the ThiC family. [4Fe-4S] cluster is required as a cofactor.

The enzyme catalyses 5-amino-1-(5-phospho-beta-D-ribosyl)imidazole + S-adenosyl-L-methionine = 4-amino-2-methyl-5-(phosphooxymethyl)pyrimidine + CO + 5'-deoxyadenosine + formate + L-methionine + 3 H(+). It participates in cofactor biosynthesis; thiamine diphosphate biosynthesis. Its function is as follows. Catalyzes the synthesis of the hydroxymethylpyrimidine phosphate (HMP-P) moiety of thiamine from aminoimidazole ribotide (AIR) in a radical S-adenosyl-L-methionine (SAM)-dependent reaction. This chain is Phosphomethylpyrimidine synthase, found in Methanococcus aeolicus (strain ATCC BAA-1280 / DSM 17508 / OCM 812 / Nankai-3).